Reading from the N-terminus, the 407-residue chain is Arylacetamide deacetylase-like 4 family member 1 (407 aa).

The Cytoplasmic segment spans residues 1 to 4 (MLYL). Residues 5-25 (VGFLLATVCLLVLGVNVWVLI) traverse the membrane as a helical; Signal-anchor for type II membrane protein segment. At 26–407 (DHFLTIDVPP…NAVVSYIKDL (382 aa)) the chain is on the lumenal side. The Involved in the stabilization of the negatively charged intermediate by the formation of the oxyanion hole signature appears at 119–121 (HGG). The N-linked (GlcNAc...) asparagine glycan is linked to N168. Residues S193, D347, and H377 contribute to the active site.

This sequence belongs to the 'GDXG' lipolytic enzyme family.

The protein resides in the membrane. This Mus musculus (Mouse) protein is Arylacetamide deacetylase-like 4 family member 1.